The following is a 375-amino-acid chain: Chaperone protein DnaJ (375 aa).

The region spanning 5–70 (DYYEILGISK…EKRAAYDQYG (66 aa)) is the J domain. The segment at 130–208 (GIIKEICIPT…CHGNGRVERS (79 aa)) adopts a CR-type zinc-finger fold. Residues Cys-143, Cys-146, Cys-160, Cys-163, Cys-182, Cys-185, Cys-196, and Cys-199 each contribute to the Zn(2+) site. CXXCXGXG motif repeat units lie at residues 143-150 (CEKCRGTG), 160-167 (CMTCHGQG), 182-189 (CPTCHGHG), and 196-203 (CNKCHGNG).

The protein belongs to the DnaJ family. In terms of assembly, homodimer. Requires Zn(2+) as cofactor.

The protein resides in the cytoplasm. In terms of biological role, participates actively in the response to hyperosmotic and heat shock by preventing the aggregation of stress-denatured proteins and by disaggregating proteins, also in an autonomous, DnaK-independent fashion. Unfolded proteins bind initially to DnaJ; upon interaction with the DnaJ-bound protein, DnaK hydrolyzes its bound ATP, resulting in the formation of a stable complex. GrpE releases ADP from DnaK; ATP binding to DnaK triggers the release of the substrate protein, thus completing the reaction cycle. Several rounds of ATP-dependent interactions between DnaJ, DnaK and GrpE are required for fully efficient folding. Also involved, together with DnaK and GrpE, in the DNA replication of plasmids through activation of initiation proteins. This is Chaperone protein DnaJ from Blochmanniella pennsylvanica (strain BPEN).